A 95-amino-acid polypeptide reads, in one-letter code: UPF0213 protein PEPE_0875 (95 aa).

The GIY-YIG domain maps to 7 to 82 (NGFYFYVLRC…KQRTRSSKIK (76 aa)).

Belongs to the UPF0213 family.

The sequence is that of UPF0213 protein PEPE_0875 from Pediococcus pentosaceus (strain ATCC 25745 / CCUG 21536 / LMG 10740 / 183-1w).